A 41-amino-acid polypeptide reads, in one-letter code: Large ribosomal subunit protein bL36 (41 aa).

The protein belongs to the bacterial ribosomal protein bL36 family.

In Nitrobacter hamburgensis (strain DSM 10229 / NCIMB 13809 / X14), this protein is Large ribosomal subunit protein bL36.